A 363-amino-acid chain; its full sequence is Apelin receptor B (363 aa).

The Extracellular segment spans residues 1–38; that stretch reads MESEGFSATTEQYEYYDYANETGLQPCDETDWDFSYSL. Asn20 carries an N-linked (GlcNAc...) asparagine glycan. Intrachain disulfides connect Cys27–Cys287 and Cys109–Cys186. A helical membrane pass occupies residues 39-59; the sequence is LPVFYMIVFVLGLSGNGVVIF. Over 60 to 77 the chain is Cytoplasmic; the sequence is TVWKAKPKRRSADTYIGN. The helical transmembrane segment at 78–98 threads the bilayer; that stretch reads LALADLAFVVTLPLWATYTAL. Residues 99-111 lie on the Extracellular side of the membrane; sequence GFHWPFGSALCKL. Residues 112–132 traverse the membrane as a helical segment; that stretch reads SSYLVLLNMFASVFCLTCLSF. Residues 133-152 lie on the Cytoplasmic side of the membrane; the sequence is DRYLAIVHSLSSAKLRSRSS. A helical membrane pass occupies residues 153-173; sequence ILVSLAVIWLFSGLLALPSLI. The Extracellular portion of the chain corresponds to 174–200; it reads LRDTRVEGNNTICDLDFSGVSSKENEN. N-linked (GlcNAc...) asparagine glycosylation is present at Asn182. The chain crosses the membrane as a helical span at residues 201-221; that stretch reads FWIGGLSILTTVPGFLLPLLL. Residues 222 to 249 lie on the Cytoplasmic side of the membrane; the sequence is MTIFYCFIGGKVTMHFQNLKKEEQKKKR. Residues 250–270 traverse the membrane as a helical segment; sequence LLKIIITLVVVFAICWLPFHI. The Extracellular segment spans residues 271 to 297; sequence LKTIHFLDLMGFLELSCSAQNIIVSLH. Residues 298 to 318 form a helical membrane-spanning segment; it reads PYATCLAYVNSCLNPFLYAFF. The Cytoplasmic portion of the chain corresponds to 319–363; it reads DLRFRSQCFFFFGFKKVLQGHLSNTSSSLSAQTQKSEIHSLATKV.

This sequence belongs to the G-protein coupled receptor 1 family. As to expression, expressed in all blood vessels including the posterior cardinal vein, intersomitic veins and the vitelline vein network.

The protein resides in the cell membrane. In terms of biological role, g protein-coupled receptor for peptide hormones apelin (apln) and apelin receptor early endogenous ligand (apela), that plays a role in the regulation of normal cardiovascular function and fluid homeostasis. When acting as apelin receptor, activates both G(i) protein pathway that inhibits adenylate cyclase activity, and the beta-arrestin pathway that promotes internalization of the receptor. Also functions as mechanoreceptor that is activated by pathological stimuli in a G-protein-independent fashion to induce beta-arrestin signaling, hence eliciting cardiac hypertrophy. However, the presence of apelin ligand blunts cardiac hypertrophic induction from APLNR/APJ on response to pathological stimuli. Plays a key role in early development such as gastrulation, blood vessels formation and heart morphogenesis by acting as a receptor for apela hormone, promoting endoderm and mesendoderm cell migration and regulating the migration of cells fated to become myocardial progenitors, respectively. Promotes angioblast migration toward the embryonic midline, i.e. the position of the future vessel formation, during vasculogenesis. May promote sinus venosus (SV)-derived endothelial cells migration into the developing heart to promote coronary blood vessel development. Required for cardiovascular development, particularly for intersomitic vein angiogenesis by acting as a receptor for apln hormone. Also plays a role in various processes in adults such as regulation of blood vessel formation, blood pressure, heart contractility, and heart failure. Acts upstream of the i/o type of G-alpha proteins in the differentiation of endothelium, erythroid cells, myeloid cells and cardiomyocytes. This Xenopus laevis (African clawed frog) protein is Apelin receptor B (aplnr-b).